Reading from the N-terminus, the 187-residue chain is Elongation factor P (187 aa).

It belongs to the elongation factor P family.

Its subcellular location is the cytoplasm. It functions in the pathway protein biosynthesis; polypeptide chain elongation. Functionally, involved in peptide bond synthesis. Stimulates efficient translation and peptide-bond synthesis on native or reconstituted 70S ribosomes in vitro. Probably functions indirectly by altering the affinity of the ribosome for aminoacyl-tRNA, thus increasing their reactivity as acceptors for peptidyl transferase. The polypeptide is Elongation factor P (Jannaschia sp. (strain CCS1)).